Reading from the N-terminus, the 716-residue chain is Fatty acid oxidation complex subunit alpha (716 aa).

The segment at 1–189 is enoyl-CoA hydratase/isomerase; sequence MIYQSPTIQV…KVGAVDAVVA (189 aa). D296 serves as a coordination point for substrate. Residues 311-716 form a 3-hydroxyacyl-CoA dehydrogenase region; it reads KEVKNAAVLG…ATNNGSYYQA (406 aa). NAD(+) contacts are provided by residues M324, D343, 400–402, K407, and S429; that span reads VVE. H450 serves as the catalytic For 3-hydroxyacyl-CoA dehydrogenase activity. An NAD(+)-binding site is contributed by N453. Residues N500 and Y660 each coordinate substrate.

In the N-terminal section; belongs to the enoyl-CoA hydratase/isomerase family. The protein in the C-terminal section; belongs to the 3-hydroxyacyl-CoA dehydrogenase family. In terms of assembly, heterotetramer of two alpha chains (FadB) and two beta chains (FadA).

The catalysed reaction is a (3S)-3-hydroxyacyl-CoA + NAD(+) = a 3-oxoacyl-CoA + NADH + H(+). It catalyses the reaction a (3S)-3-hydroxyacyl-CoA = a (2E)-enoyl-CoA + H2O. It carries out the reaction a 4-saturated-(3S)-3-hydroxyacyl-CoA = a (3E)-enoyl-CoA + H2O. The enzyme catalyses (3S)-3-hydroxybutanoyl-CoA = (3R)-3-hydroxybutanoyl-CoA. The catalysed reaction is a (3Z)-enoyl-CoA = a 4-saturated (2E)-enoyl-CoA. It catalyses the reaction a (3E)-enoyl-CoA = a 4-saturated (2E)-enoyl-CoA. The protein operates within lipid metabolism; fatty acid beta-oxidation. Involved in the aerobic and anaerobic degradation of long-chain fatty acids via beta-oxidation cycle. Catalyzes the formation of 3-oxoacyl-CoA from enoyl-CoA via L-3-hydroxyacyl-CoA. It can also use D-3-hydroxyacyl-CoA and cis-3-enoyl-CoA as substrate. This is Fatty acid oxidation complex subunit alpha from Shewanella putrefaciens (strain CN-32 / ATCC BAA-453).